A 110-amino-acid chain; its full sequence is Small ribosomal subunit protein bS16 (110 aa).

The interval 84–110 is disordered; that stretch reads KRAPRNNPEKAVPRKERKAAAEAAAKA. Basic and acidic residues predominate over residues 90-103; the sequence is NPEKAVPRKERKAA.

The protein belongs to the bacterial ribosomal protein bS16 family.

In Afipia carboxidovorans (strain ATCC 49405 / DSM 1227 / KCTC 32145 / OM5) (Oligotropha carboxidovorans), this protein is Small ribosomal subunit protein bS16.